Reading from the N-terminus, the 508-residue chain is UDP-N-acetylmuramoyl-L-alanyl-D-glutamate--2,6-diaminopimelate ligase (508 aa).

Position 29 (serine 29) interacts with UDP-N-acetyl-alpha-D-muramoyl-L-alanyl-D-glutamate. Residue 112–118 (GTNGKTS) coordinates ATP. Residues 159-160 (TT), serine 186, glutamine 192, and arginine 194 contribute to the UDP-N-acetyl-alpha-D-muramoyl-L-alanyl-D-glutamate site. The residue at position 226 (lysine 226) is an N6-carboxylysine. Meso-2,6-diaminopimelate is bound by residues arginine 398, 421–424 (DNPR), glycine 473, and glutamate 477. Positions 421–424 (DNPR) match the Meso-diaminopimelate recognition motif motif.

The protein belongs to the MurCDEF family. MurE subfamily. Mg(2+) serves as cofactor. Carboxylation is probably crucial for Mg(2+) binding and, consequently, for the gamma-phosphate positioning of ATP.

The protein localises to the cytoplasm. It carries out the reaction UDP-N-acetyl-alpha-D-muramoyl-L-alanyl-D-glutamate + meso-2,6-diaminopimelate + ATP = UDP-N-acetyl-alpha-D-muramoyl-L-alanyl-gamma-D-glutamyl-meso-2,6-diaminopimelate + ADP + phosphate + H(+). Its pathway is cell wall biogenesis; peptidoglycan biosynthesis. Its function is as follows. Catalyzes the addition of meso-diaminopimelic acid to the nucleotide precursor UDP-N-acetylmuramoyl-L-alanyl-D-glutamate (UMAG) in the biosynthesis of bacterial cell-wall peptidoglycan. The sequence is that of UDP-N-acetylmuramoyl-L-alanyl-D-glutamate--2,6-diaminopimelate ligase from Janthinobacterium sp. (strain Marseille) (Minibacterium massiliensis).